Here is a 72-residue protein sequence, read N- to C-terminus: Translation initiation factor IF-1 (72 aa).

Positions Met-1–Arg-72 constitute an S1-like domain.

Belongs to the IF-1 family. In terms of assembly, component of the 30S ribosomal translation pre-initiation complex which assembles on the 30S ribosome in the order IF-2 and IF-3, IF-1 and N-formylmethionyl-tRNA(fMet); mRNA recruitment can occur at any time during PIC assembly.

The protein resides in the cytoplasm. One of the essential components for the initiation of protein synthesis. Stabilizes the binding of IF-2 and IF-3 on the 30S subunit to which N-formylmethionyl-tRNA(fMet) subsequently binds. Helps modulate mRNA selection, yielding the 30S pre-initiation complex (PIC). Upon addition of the 50S ribosomal subunit IF-1, IF-2 and IF-3 are released leaving the mature 70S translation initiation complex. The sequence is that of Translation initiation factor IF-1 from Actinobacillus succinogenes (strain ATCC 55618 / DSM 22257 / CCUG 43843 / 130Z).